The chain runs to 477 residues: Minor capsid protein (477 aa).

This sequence belongs to the closteroviridae minor capsid protein family.

Its subcellular location is the virion. Minor capsid protein that encapsidates the 5'-terminal portion of the viral genome. This Vitis vinifera (Grape) protein is Minor capsid protein.